The following is a 357-amino-acid chain: Alanine racemase (357 aa).

The active-site Proton acceptor; specific for D-alanine is the Lys-34. An N6-(pyridoxal phosphate)lysine modification is found at Lys-34. Substrate is bound at residue Arg-129. Residue Tyr-254 is the Proton acceptor; specific for L-alanine of the active site. Position 302 (Met-302) interacts with substrate.

It belongs to the alanine racemase family. It depends on pyridoxal 5'-phosphate as a cofactor.

The catalysed reaction is L-alanine = D-alanine. It participates in amino-acid biosynthesis; D-alanine biosynthesis; D-alanine from L-alanine: step 1/1. Functionally, catalyzes the interconversion of L-alanine and D-alanine. Likely plays an important role in supplying D-alanine, which is an indispensable constituent in the biosynthesis of bacterial cell-wall peptidoglycan. The protein is Alanine racemase of Aeromonas hydrophila subsp. hydrophila (strain ATCC 7966 / DSM 30187 / BCRC 13018 / CCUG 14551 / JCM 1027 / KCTC 2358 / NCIMB 9240 / NCTC 8049).